The following is a 349-amino-acid chain: Ion-translocating oxidoreductase complex subunit D (349 aa).

The next 3 helical transmembrane spans lie at 20 to 42 (VMQR…FGWG), 77 to 99 (SAML…WMIV), and 124 to 144 (AMAA…TWIA). The residue at position 185 (Thr185) is an FMN phosphoryl threonine. 5 helical membrane passes run 212-232 (STGV…LVLL), 239-259 (WHIS…GFLL), 265-285 (ASPL…FIAT), 291-311 (ATSP…VYII), and 315-335 (GGYP…APFI).

It belongs to the NqrB/RnfD family. As to quaternary structure, the complex is composed of six subunits: RnfA, RnfB, RnfC, RnfD, RnfE and RnfG. It depends on FMN as a cofactor.

The protein resides in the cell inner membrane. Its function is as follows. Part of a membrane-bound complex that couples electron transfer with translocation of ions across the membrane. In Shewanella baltica (strain OS185), this protein is Ion-translocating oxidoreductase complex subunit D.